The primary structure comprises 271 residues: Undecaprenyl-diphosphatase (271 aa).

The next 8 membrane-spanning stretches (helical) occupy residues 5-25 (YALF…FLPV), 45-65 (AATF…AVFW), 86-106 (TLSL…GLGI), 114-134 (LFGP…LIIA), 149-169 (ISYK…WPGF), 189-209 (AAEF…GLDL), 226-246 (VGFI…LALI), and 251-271 (FIPF…VFVA).

It belongs to the UppP family.

Its subcellular location is the cell inner membrane. It carries out the reaction di-trans,octa-cis-undecaprenyl diphosphate + H2O = di-trans,octa-cis-undecaprenyl phosphate + phosphate + H(+). Its function is as follows. Catalyzes the dephosphorylation of undecaprenyl diphosphate (UPP). Confers resistance to bacitracin. The protein is Undecaprenyl-diphosphatase of Aeromonas salmonicida (strain A449).